The primary structure comprises 662 residues: 72 kDa type IV collagenase (662 aa).

The signal sequence occupies residues 1–29; it reads MEARVAWGALAGPLRVLCVLCCLLGRAIA. Residues 30–109 constitute a propeptide, activation peptide; sequence APSPIIKFPG…PRCGNPDVAN (80 aa). A Cysteine switch motif is present at residues 100–107; it reads PRCGNPDV. Zn(2+) is bound at residue cysteine 102. The segment at 110–221 is collagenase-like 1; it reads YNFFPRKPKW…LWTLGEGQVV (112 aa). Ca(2+) contacts are provided by aspartate 134 and aspartate 168. Positions 178 and 180 each coordinate Zn(2+). Ca(2+) is bound by residues aspartate 185 and glycine 186. Residue histidine 193 coordinates Zn(2+). Ca(2+) contacts are provided by glycine 200, glycine 202, and aspartate 204. Histidine 206 contributes to the Zn(2+) binding site. Aspartate 208, aspartate 209, and glutamate 211 together coordinate Ca(2+). Residues 222–396 form a collagen-binding region; that stretch reads RVKYGNADGE…WGFCPDQGYS (175 aa). 3 consecutive Fibronectin type-II domains span residues 228–276, 286–334, and 344–392; these read ADGE…FCPH, ADGQ…FCPE, and SEGA…FCPD. Disulfide bonds link cysteine 233–cysteine 259, cysteine 247–cysteine 274, cysteine 291–cysteine 317, cysteine 305–cysteine 332, cysteine 349–cysteine 375, and cysteine 363–cysteine 390. The collagenase-like 2 stretch occupies residues 397–467; sequence LFLVAAHEFG…GPTPTLGPVT (71 aa). Position 403 (histidine 403) interacts with Zn(2+). Glutamate 404 is a catalytic residue. 2 residues coordinate Zn(2+): histidine 407 and histidine 413. Residues 414 to 662 form a required for inhibitor TIMP2 binding region; the sequence is SQDPGALMAP…GSIKSDWLGC (249 aa). A disordered region spans residues 446 to 465; that stretch reads GPSPDADTDTGTGPTPTLGP. An intrachain disulfide couples cysteine 471 to cysteine 662. 4 Hemopexin repeats span residues 474–518, 519–565, 567–615, and 616–662; these read DIVF…WPEL, PEKI…GLPP, VQQV…WNAI, and PDNL…WLGC. Positions 478, 523, and 571 each coordinate Ca(2+). Asparagine 575 carries N-linked (GlcNAc...) asparagine glycosylation. Aspartate 620 contacts Ca(2+). Asparagine 644 carries an N-linked (GlcNAc...) asparagine glycan.

The protein belongs to the peptidase M10A family. Interacts (via the C-terminal hemopexin-like domains-containing region) with the integrin alpha-V/beta-3; the interaction promotes vascular invasion in angiogenic vessels and melamoma cells. Interacts (via the C-terminal PEX domain) with TIMP2 (via the C-terminal); the interaction inhibits the degradation activity. Interacts with GSK3B. Ca(2+) is required as a cofactor. It depends on Zn(2+) as a cofactor. In terms of processing, phosphorylation on multiple sites modulates enzymatic activity. Phosphorylated by PKC in vitro. Post-translationally, the propeptide is processed by MMP14 (MT-MMP1) and MMP16 (MT-MMP3). Autocatalytic cleavage in the C-terminal produces the anti-angiogenic peptide, PEX. This processing appears to be facilitated by binding integrinv/beta3.

Its subcellular location is the secreted. It is found in the extracellular space. The protein localises to the extracellular matrix. The protein resides in the membrane. It localises to the nucleus. Its subcellular location is the cytoplasm. It is found in the mitochondrion. It catalyses the reaction Cleavage of gelatin type I and collagen types IV, V, VII, X. Cleaves the collagen-like sequence Pro-Gln-Gly-|-Ile-Ala-Gly-Gln.. Its function is as follows. Ubiquitinous metalloproteinase that is involved in diverse functions such as remodeling of the vasculature, angiogenesis, tissue repair, tumor invasion, inflammation, and atherosclerotic plaque rupture. As well as degrading extracellular matrix proteins, can also act on several nonmatrix proteins such as big endothelial 1 and beta-type CGRP promoting vasoconstriction. Also cleaves KISS at a Gly-|-Leu bond. Appears to have a role in myocardial cell death pathways. Contributes to myocardial oxidative stress by regulating the activity of GSK3beta. Cleaves GSK3beta in vitro. Involved in the formation of the fibrovascular tissues. Functionally, PEX, the C-terminal non-catalytic fragment of MMP2, possesses anti-angiogenic and anti-tumor properties and inhibits cell migration and cell adhesion to FGF2 and vitronectin. Ligand for integrin alpha-v/beta-3 on the surface of blood vessels. Mediates the proteolysis of CHUK/IKKA and initiates a primary innate immune response by inducing mitochondrial-nuclear stress signaling with activation of the pro-inflammatory NF-kappaB, NFAT and IRF transcriptional pathways. The chain is 72 kDa type IV collagenase (Mmp2) from Mus musculus (Mouse).